The chain runs to 462 residues: Argininosuccinate lyase (462 aa).

It belongs to the lyase 1 family. Argininosuccinate lyase subfamily.

It localises to the cytoplasm. It carries out the reaction 2-(N(omega)-L-arginino)succinate = fumarate + L-arginine. It functions in the pathway amino-acid biosynthesis; L-arginine biosynthesis; L-arginine from L-ornithine and carbamoyl phosphate: step 3/3. The sequence is that of Argininosuccinate lyase from Bacillus cytotoxicus (strain DSM 22905 / CIP 110041 / 391-98 / NVH 391-98).